Reading from the N-terminus, the 343-residue chain is General transcription and DNA repair factor IIH subunit TFB6 (343 aa).

The residue at position 69 (Tyr69) is a Phosphotyrosine. Thr71 and Thr84 each carry phosphothreonine. Ser104, Ser105, Ser108, and Ser342 each carry phosphoserine.

Component of the general transcription factor TFIIH, composed of a 7-subunit TFIIH core complex composed of XPB/SSL2, XPD/RAD3, SSL1, TFB1, TFB2, TFB4 and TFB5 which is active in NER; the 3-subunit CTD-kinase module TFIIK composed of CCL1, KIN28, and TFB3 which is active in transcription; as well as TFB6 that regulates SSL2 association with the complex. Phosphorylation leads the dissociation of from SSL2.

The protein resides in the cytoplasm. It is found in the nucleus. In terms of biological role, component of the general transcription and DNA repair factor IIH (TFIIH) core complex, which is involved in general and transcription-coupled nucleotide excision repair (NER) of damaged DNA and, when complexed to TFIIK, in RNA transcription by RNA polymerase II. In NER, TFIIH acts by opening DNA around the lesion to allow the excision of the damaged oligonucleotide and its replacement by a new DNA fragment. In transcription, TFIIH has an essential role in transcription initiation. When the pre-initiation complex (PIC) has been established, TFIIH is required for promoter opening and promoter escape. Phosphorylation of the C-terminal tail (CTD) of the largest subunit of RNA polymerase II by the kinase module TFIIK controls the initiation of transcription. TFB6 facilitates dissociation of the SSL2 helicase from TFIIH after transcription initiation. The protein is General transcription and DNA repair factor IIH subunit TFB6 of Saccharomyces cerevisiae (strain ATCC 204508 / S288c) (Baker's yeast).